A 337-amino-acid chain; its full sequence is Nicotinate-nucleotide--dimethylbenzimidazole phosphoribosyltransferase (337 aa).

Glutamate 305 (proton acceptor) is an active-site residue.

It belongs to the CobT family.

The enzyme catalyses 5,6-dimethylbenzimidazole + nicotinate beta-D-ribonucleotide = alpha-ribazole 5'-phosphate + nicotinate + H(+). It participates in nucleoside biosynthesis; alpha-ribazole biosynthesis; alpha-ribazole from 5,6-dimethylbenzimidazole: step 1/2. Functionally, catalyzes the synthesis of alpha-ribazole-5'-phosphate from nicotinate mononucleotide (NAMN) and 5,6-dimethylbenzimidazole (DMB). The polypeptide is Nicotinate-nucleotide--dimethylbenzimidazole phosphoribosyltransferase (Jannaschia sp. (strain CCS1)).